We begin with the raw amino-acid sequence, 459 residues long: ATP-dependent protease ATPase subunit HslU (459 aa).

ATP contacts are provided by residues valine 26, 68 to 73, aspartate 271, glutamate 337, and arginine 409; that span reads GVGKTE.

The protein belongs to the ClpX chaperone family. HslU subfamily. In terms of assembly, a double ring-shaped homohexamer of HslV is capped on each side by a ring-shaped HslU homohexamer. The assembly of the HslU/HslV complex is dependent on binding of ATP.

It is found in the cytoplasm. ATPase subunit of a proteasome-like degradation complex; this subunit has chaperone activity. The binding of ATP and its subsequent hydrolysis by HslU are essential for unfolding of protein substrates subsequently hydrolyzed by HslV. HslU recognizes the N-terminal part of its protein substrates and unfolds these before they are guided to HslV for hydrolysis. This is ATP-dependent protease ATPase subunit HslU from Xylella fastidiosa (strain M23).